Reading from the N-terminus, the 973-residue chain is UvrABC system protein A (973 aa).

34 to 41 (GLSGSGKS) is an ATP binding site. ABC transporter domains follow at residues 330–609 (WAKS…PNSI) and 629–958 (AKKN…QFLK). 662–669 (GVSGGGKS) is an ATP binding site. A C4-type zinc finger spans residues 761–787 (CEACQGDGVIKIEMHFLPDVYVTCDVC).

The protein belongs to the ABC transporter superfamily. UvrA family. Forms a heterotetramer with UvrB during the search for lesions.

It is found in the cytoplasm. Functionally, the UvrABC repair system catalyzes the recognition and processing of DNA lesions. UvrA is an ATPase and a DNA-binding protein. A damage recognition complex composed of 2 UvrA and 2 UvrB subunits scans DNA for abnormalities. When the presence of a lesion has been verified by UvrB, the UvrA molecules dissociate. This chain is UvrABC system protein A, found in Mesorhizobium japonicum (strain LMG 29417 / CECT 9101 / MAFF 303099) (Mesorhizobium loti (strain MAFF 303099)).